A 274-amino-acid polypeptide reads, in one-letter code: GATA transcription factor 1 (274 aa).

Disordered stretches follow at residues methionine 1–leucine 39 and serine 102–alanine 132. The Nuclear localization signal signature appears at lysine 152–arginine 159. The segment at leucine 190–alanine 244 adopts a GATA-type zinc-finger fold.

This sequence belongs to the type IV zinc-finger family. Class A subfamily. In terms of tissue distribution, mostly expressed in roots. Also expressed in stems, flowers and leaves.

Its subcellular location is the nucleus. Transcriptional activator that specifically binds 5'-GATA-3' or 5'-GAT-3' motifs within gene promoters. May be involved in the regulation of some light-responsive genes. The protein is GATA transcription factor 1 (GATA1) of Arabidopsis thaliana (Mouse-ear cress).